A 342-amino-acid polypeptide reads, in one-letter code: Muscleblind-like protein 3 (342 aa).

4 C3H1-type zinc fingers span residues 14 to 42, 48 to 74, 174 to 202, and 210 to 236; these read WLTLEVCREFQRGTCSRADAECRFAHPPR, NGRVVACFDSLKGRCTRENCKYLHPPP, TDRLEVCREFQRGNCTRGESECRYAHPTD, and DNSVTICMDYIKGRCSREKCKYFHPPP. The span at 316–326 shows a compositional bias: low complexity; it reads PSTVSTATPPA. Residues 316–342 form a disordered region; the sequence is PSTVSTATPPASNVPYVPTTTGNQLKY. The span at 333–342 shows a compositional bias: polar residues; that stretch reads PTTTGNQLKY.

The protein belongs to the muscleblind family.

The protein resides in the nucleus. It localises to the cytoplasm. Mediates pre-mRNA alternative splicing regulation. Acts either as activator or repressor of splicing on specific pre-mRNA targets. Inhibits cardiac troponin-T (TNNT2) pre-mRNA exon inclusion but induces insulin receptor (IR) pre-mRNA exon inclusion in muscle. Antagonizes the alternative splicing activity pattern of CELF proteins. Could inhibit terminal muscle differentiation, acting at approximately the time of myogenin induction. This is Muscleblind-like protein 3 (Mbnl3) from Mus musculus (Mouse).